Here is a 295-residue protein sequence, read N- to C-terminus: G1/S-specific cyclin-D1 (295 aa).

One can recognise a Cyclin N-terminal domain in the interval 28–152; sequence LRAMLKTEET…LLVNKLKWNL (125 aa). K269 participates in a covalent cross-link: Glycyl lysine isopeptide (Lys-Gly) (interchain with G-Cter in ubiquitin). Residues 269-295 are disordered; sequence KATEEEGEVEEEAGLACTPTDVRDVDI. A Phosphothreonine modification is found at T286.

This sequence belongs to the cyclin family. Cyclin D subfamily. In terms of assembly, interacts with either CDK4 or CDK6 protein kinase to form a serine/threonine kinase holoenzyme complex. The cyclin subunit imparts substrate specificity to the complex. Component of the ternary complex CCND1/CDK4/CDKN1B required for nuclear translocation and modulation of CDK4-mediated kinase activity. Interacts directly with CDKN1B. Can form similar complexes with either CDKN1A or CDKN2A. Interacts with UHRF2; the interaction ubiquitinates CCND1 and appears to occur independently of phosphorylation. Interacts with USP2. Interacts (via cyclin N-terminal domain) with INSM1 (via N-terminal region); the interaction competes with the binding of CCND1 to CDK4 during cell cycle progression and inhibits CDK4 activity. Interacts with CDK4; the interaction is prevented with the binding of CCND1 to INSM1 during cell cycle progression. In terms of processing, phosphorylation at Thr-286 by MAP kinases is required for ubiquitination and degradation by the DCX(AMBRA1) complex. It also plays an essential role for recognition by the FBXO31 component of SCF (SKP1-cullin-F-box) protein ligase complex following DNA damage. Post-translationally, ubiquitinated at Lys-269 by the DCX(AMBRA1) complex during the transition from G1 to S cell phase, leading to its degradation: ubiquitination is dependent on Thr-286 phosphorylation. The DCX(AMBRA1) complex represents the major regulator of CCND1 stability during the G1/S transition. Also ubiquitinated by the SCF(FBXO4) and Cul7-RING(FBXW8) ubiquitin-protein ligase complexes. Following DNA damage it is ubiquitinated by the SCF(FBXO31) protein ligase complex. SCF(FBXO31) ubiquitination is dependent on Thr-286 phosphorylation. Ubiquitinated also by UHRF2 apparently in a phosphorylation-independent manner. Ubiquitination leads to its degradation and G1 arrest. Deubiquitinated by USP2; leading to its stabilization.

The protein resides in the nucleus. The protein localises to the cytoplasm. Its subcellular location is the nucleus membrane. Regulatory component of the cyclin D1-CDK4 (DC) complex that phosphorylates and inhibits members of the retinoblastoma (RB) protein family including RB1 and regulates the cell-cycle during G(1)/S transition. Phosphorylation of RB1 allows dissociation of the transcription factor E2F from the RB/E2F complex and the subsequent transcription of E2F target genes which are responsible for the progression through the G(1) phase. Hypophosphorylates RB1 in early G(1) phase. Cyclin D-CDK4 complexes are major integrators of various mitogenenic and antimitogenic signals. Also a substrate for SMAD3, phosphorylating SMAD3 in a cell-cycle-dependent manner and repressing its transcriptional activity. Component of the ternary complex, cyclin D1/CDK4/CDKN1B, required for nuclear translocation and activity of the cyclin D-CDK4 complex. Exhibits transcriptional corepressor activity with INSM1 on the NEUROD1 and INS promoters in a cell cycle-independent manner. The sequence is that of G1/S-specific cyclin-D1 (Ccnd1) from Rattus norvegicus (Rat).